The following is a 154-amino-acid chain: Large ribosomal subunit protein uL13 (154 aa).

This sequence belongs to the universal ribosomal protein uL13 family. In terms of assembly, part of the 50S ribosomal subunit.

This protein is one of the early assembly proteins of the 50S ribosomal subunit, although it is not seen to bind rRNA by itself. It is important during the early stages of 50S assembly. This Rhodopseudomonas palustris (strain BisB5) protein is Large ribosomal subunit protein uL13.